The following is a 260-amino-acid chain: MDKKIVIPGDLLSENQKKAGYGTYVKNDKIYSSLCGIENLKEDKVGVIPLAGAYIPSANDVVIGIVIVVTPSNWIFDIAAPYDGLLHVSEYPRRVESREMPEILNVGDSVILRVKDVDSSMKVELALRDPSLHKLKTGQIIKVESVKVPRVIGHGGSMISMLKKETNCSIFVGQNGRIWIDGKDEDIELLSKALRKIELEAQRSGLTDRIYNFLKNERIRQKESKPVGFFKNETEGVTATKEDHSEEIYRKIDVLLDPKN.

Residues 59–128 (NDVVIGIVIV…SSMKVELALR (70 aa)) enclose the S1 motif domain. The KH domain occupies 136 to 194 (KTGQIIKVESVKVPRVIGHGGSMISMLKKETNCSIFVGQNGRIWIDGKDEDIELLSKAL).

This sequence belongs to the RRP4 family. Component of the archaeal exosome complex. Forms a trimer of Rrp4 and/or Csl4 subunits. The trimer associates with a hexameric ring-like arrangement composed of 3 Rrp41-Rrp42 heterodimers.

It localises to the cytoplasm. Functionally, non-catalytic component of the exosome, which is a complex involved in RNA degradation. Increases the RNA binding and the efficiency of RNA degradation. Confers strong poly(A) specificity to the exosome. The protein is Exosome complex component Rrp4 of Methanosarcina acetivorans (strain ATCC 35395 / DSM 2834 / JCM 12185 / C2A).